Here is a 423-residue protein sequence, read N- to C-terminus: Lysosomal acid phosphatase (423 aa).

An N-terminal signal peptide occupies residues 1–30 (MAGKRSGWSRAALLQLLLGVNLVVMPPTRA). The Lumenal segment spans residues 31–380 (RSLRFVTLLY…QLASGPADTE (350 aa)). The Nucleophile role is filled by histidine 42. Residues asparagine 92, asparagine 133, asparagine 167, asparagine 177, asparagine 191, and asparagine 267 are each glycosylated (N-linked (GlcNAc...) asparagine). Intrachain disulfides connect cysteine 159/cysteine 370, cysteine 212/cysteine 310, and cysteine 345/cysteine 349. The active-site Proton donor is aspartate 287. 2 N-linked (GlcNAc...) asparagine glycosylation sites follow: asparagine 322 and asparagine 331. Residues 381 to 401 (VIVALAVCGSILFLLIVLLLT) traverse the membrane as a helical segment. Topologically, residues 402 to 423 (VLFRMQAQPPGYRHVADGEDHA) are cytoplasmic.

It belongs to the histidine acid phosphatase family. In terms of processing, the membrane-bound form is converted to the soluble form by sequential proteolytic processing. First, the C-terminal cytoplasmic tail is removed. Cleavage by a lysosomal protease releases the soluble form in the lysosome lumen. Post-translationally, N-glycosylated. The intermediates formed during enzymatic deglycosylation suggest that all eight predicted N-glycosylation sites are used.

Its subcellular location is the lysosome membrane. It localises to the lysosome lumen. The enzyme catalyses a phosphate monoester + H2O = an alcohol + phosphate. The sequence is that of Lysosomal acid phosphatase (ACP2) from Homo sapiens (Human).